The chain runs to 702 residues: Elongation factor G (702 aa).

In terms of domain architecture, tr-type G spans 8–290 (SRYRNIGISA…AVIEYLPSPT (283 aa)). GTP contacts are provided by residues 17-24 (AHIDAGKT), 88-92 (DTPGH), and 142-145 (NKMD).

The protein belongs to the TRAFAC class translation factor GTPase superfamily. Classic translation factor GTPase family. EF-G/EF-2 subfamily.

The protein localises to the cytoplasm. Functionally, catalyzes the GTP-dependent ribosomal translocation step during translation elongation. During this step, the ribosome changes from the pre-translocational (PRE) to the post-translocational (POST) state as the newly formed A-site-bound peptidyl-tRNA and P-site-bound deacylated tRNA move to the P and E sites, respectively. Catalyzes the coordinated movement of the two tRNA molecules, the mRNA and conformational changes in the ribosome. This chain is Elongation factor G, found in Edwardsiella ictaluri (strain 93-146).